The chain runs to 190 residues: Dual-action ribosomal maturation protein DarP (190 aa).

Residues 1-31 are disordered; the sequence is MIHADHDDNLPDDEEGLPLPPSKSQRKRDMH.

Belongs to the DarP family.

The protein localises to the cytoplasm. Member of a network of 50S ribosomal subunit biogenesis factors which assembles along the 30S-50S interface, preventing incorrect 23S rRNA structures from forming. Promotes peptidyl transferase center (PTC) maturation. In Aromatoleum aromaticum (strain DSM 19018 / LMG 30748 / EbN1) (Azoarcus sp. (strain EbN1)), this protein is Dual-action ribosomal maturation protein DarP.